A 98-amino-acid chain; its full sequence is NADH-ubiquinone oxidoreductase chain 4L (98 aa).

3 consecutive transmembrane segments (helical) span residues 1-21, 29-49, and 61-81; these read MTLI…GLLM, ALLC…LTIL, and IILL…LVTI.

It belongs to the complex I subunit 4L family. Core subunit of respiratory chain NADH dehydrogenase (Complex I) which is composed of 45 different subunits.

The protein localises to the mitochondrion inner membrane. The enzyme catalyses a ubiquinone + NADH + 5 H(+)(in) = a ubiquinol + NAD(+) + 4 H(+)(out). Its function is as follows. Core subunit of the mitochondrial membrane respiratory chain NADH dehydrogenase (Complex I) which catalyzes electron transfer from NADH through the respiratory chain, using ubiquinone as an electron acceptor. Part of the enzyme membrane arm which is embedded in the lipid bilayer and involved in proton translocation. This chain is NADH-ubiquinone oxidoreductase chain 4L (MT-ND4L), found in Eubalaena australis (Southern right whale).